A 276-amino-acid chain; its full sequence is Omega-amidase NIT2-B (276 aa).

Residues 4–248 (FRLSLVQFLV…ETVISADIDL (245 aa)) enclose the CN hydrolase domain. Glu43 serves as the catalytic Proton acceptor. Catalysis depends on Lys112, which acts as the Proton donor. Cys153 serves as the catalytic Nucleophile.

The protein belongs to the carbon-nitrogen hydrolase superfamily. NIT1/NIT2 family. Homodimer.

It localises to the cytoplasm. The catalysed reaction is 2-oxoglutaramate + H2O = 2-oxoglutarate + NH4(+). It catalyses the reaction 2-oxosuccinamate + H2O = oxaloacetate + NH4(+). Functionally, has omega-amidase activity. The role of omega-amidase is to remove potentially toxic intermediates by converting 2-oxoglutaramate and 2-oxosuccinamate to biologically useful 2-oxoglutarate and oxaloacetate, respectively. The sequence is that of Omega-amidase NIT2-B (nit2b) from Xenopus laevis (African clawed frog).